A 274-amino-acid chain; its full sequence is 3-methyl-2-oxobutanoate hydroxymethyltransferase (274 aa).

2 residues coordinate Mg(2+): Asp-49 and Asp-88. Residues 49 to 50 (DS), Asp-88, and Lys-118 contribute to the 3-methyl-2-oxobutanoate site. A Mg(2+)-binding site is contributed by Glu-120. The active-site Proton acceptor is the Glu-187.

It belongs to the PanB family. Homodecamer; pentamer of dimers. Mg(2+) is required as a cofactor.

Its subcellular location is the cytoplasm. The enzyme catalyses 3-methyl-2-oxobutanoate + (6R)-5,10-methylene-5,6,7,8-tetrahydrofolate + H2O = 2-dehydropantoate + (6S)-5,6,7,8-tetrahydrofolate. Its pathway is cofactor biosynthesis; (R)-pantothenate biosynthesis; (R)-pantoate from 3-methyl-2-oxobutanoate: step 1/2. Catalyzes the reversible reaction in which hydroxymethyl group from 5,10-methylenetetrahydrofolate is transferred onto alpha-ketoisovalerate to form ketopantoate. The polypeptide is 3-methyl-2-oxobutanoate hydroxymethyltransferase (Nitrobacter winogradskyi (strain ATCC 25391 / DSM 10237 / CIP 104748 / NCIMB 11846 / Nb-255)).